The primary structure comprises 70 residues: Conotoxin Lt11.6 (70 aa).

The first 26 residues, 1 to 26, serve as a signal peptide directing secretion; it reads MMFRLTSVGSFLLVIVFLNLVVLTNA. Disulfide bonds link Cys27–Cys41, Cys34–Cys46, Cys40–Cys50, and Cys45–Cys54. Residues 58 to 70 constitute a propeptide that is removed on maturation; the sequence is AQRQKLLRSFGQR.

It belongs to the conotoxin I2 superfamily. In terms of tissue distribution, expressed by the venom duct.

It localises to the secreted. The protein is Conotoxin Lt11.6 of Conus litteratus (Lettered cone).